The chain runs to 153 residues: ORM1-like protein 3 (153 aa).

An important for ceramide level-sensing region spans residues 1 to 17; the sequence is MNVGTAHSEVNPNTRVM. Residues 1 to 21 are Cytoplasmic-facing; it reads MNVGTAHSEVNPNTRVMNSRG. Helical transmembrane passes span 22–42 and 43–63; these read IWLS…SIPF and VSVP…MYIF. The Cytoplasmic segment spans residues 64-94; sequence LHTVKGTPFETPDQGKARLLTHWEQMDYGVQ. Residues 95-117 form a helical membrane-spanning segment; sequence FTASRKFLTITPIVLYFLTSFYT. Residues 118–121 lie on the Extracellular side of the membrane; it reads KYDQ. Residues 122–142 traverse the membrane as a helical segment; the sequence is IHFVLNTVSLMSVLIPKLPQL. Hydroxyproline is present on proline 137. At 143–153 the chain is on the cytoplasmic side; sequence HGVRIFGINKY.

It belongs to the ORM family. In terms of assembly, ceramide-sensitive subunit of the serine palmitoyltransferase (SPT) complex, which is also composed of SPTLC1, SPTLC2/3 and SPTSSA/B. When hydroxylated at Pro-137, ubiquitinated via 'Lys-48'-linkage, leading to proteasomal degradation. In endothelial cells, ORMDL3 proteasomal degradation is controlled by the sphingosine 1-phosphate receptor signaling pathway.

It is found in the endoplasmic reticulum membrane. Plays an essential role in the homeostatic regulation of sphingolipid de novo biosynthesis by modulating the activity of the serine palmitoyltransferase (SPT) in response to ceramide levels. When complexed to SPT, the binding of ceramides to its N-terminus stabilizes a conformation that block SPT substrate entry, hence preventing SPT catalytic activity. Through this mechanism, maintains ceramide levels at sufficient concentrations for the production of complex sphingolipids, but which prevents the accumulation of ceramides to levels that trigger apoptosis. This Ailuropoda melanoleuca (Giant panda) protein is ORM1-like protein 3 (ORMDL3).